The chain runs to 23 residues: Acidic phospholipase A2 CTs-A1 (23 aa).

The cofactor is Ca(2+). Contains 7 disulfide bonds. As to expression, expressed by the venom gland.

It localises to the secreted. The enzyme catalyses a 1,2-diacyl-sn-glycero-3-phosphocholine + H2O = a 1-acyl-sn-glycero-3-phosphocholine + a fatty acid + H(+). Its function is as follows. Snake venom phospholipase A2 (PLA2) that shows a moderate inhibition of ADP-induced human platelet aggregation when tested on platelet rich plasma. Exhibits moderate hydrolytic activities and prefers the anionic micelles (dPPC with deoxycholate) to the zwitterionic micelles (dPPC with Triton X-100). PLA2 catalyzes the calcium-dependent hydrolysis of the 2-acyl groups in 3-sn-phosphoglycerides. This Trimeresurus stejnegeri (Chinese green tree viper) protein is Acidic phospholipase A2 CTs-A1.